Reading from the N-terminus, the 227-residue chain is CDP-diacylglycerol--glycerol-3-phosphate 3-phosphatidyltransferase (227 aa).

Transmembrane regions (helical) follow at residues 30–50, 58–78, 112–132, 159–179, and 192–212; these read IFIA…GSVA, VTIH…TAVI, VLIA…VIVL, WKTT…SFSL, and WAIV…SFGI.

This sequence belongs to the CDP-alcohol phosphatidyltransferase class-I family.

Its subcellular location is the cell membrane. The catalysed reaction is a CDP-1,2-diacyl-sn-glycerol + sn-glycerol 3-phosphate = a 1,2-diacyl-sn-glycero-3-phospho-(1'-sn-glycero-3'-phosphate) + CMP + H(+). It participates in phospholipid metabolism; phosphatidylglycerol biosynthesis; phosphatidylglycerol from CDP-diacylglycerol: step 1/2. In terms of biological role, this protein catalyzes the committed step to the synthesis of the acidic phospholipids. This Mycoplasma pneumoniae (strain ATCC 29342 / M129 / Subtype 1) (Mycoplasmoides pneumoniae) protein is CDP-diacylglycerol--glycerol-3-phosphate 3-phosphatidyltransferase (pgsA).